The chain runs to 380 residues: Chaperone protein DnaJ (380 aa).

Residues 5-70 (DYYEVLGVER…SKRAAYDQYG (66 aa)) form the J domain. The CR-type zinc finger occupies 139–217 (GTNVNIRVPT…CHGEGRVEES (79 aa)). 8 residues coordinate Zn(2+): Cys-152, Cys-155, Cys-169, Cys-172, Cys-191, Cys-194, Cys-205, and Cys-208. CXXCXGXG motif repeat units lie at residues 152 to 159 (CKPCDGSG), 169 to 176 (CPTCGGIG), 191 to 198 (CPRCHGHG), and 205 to 212 (CDSCHGEG). The disordered stretch occupies residues 224–245 (VPPGVDTGDRIRLSGEGEAGTQ).

The protein belongs to the DnaJ family. As to quaternary structure, homodimer. Zn(2+) is required as a cofactor.

Its subcellular location is the cytoplasm. Functionally, participates actively in the response to hyperosmotic and heat shock by preventing the aggregation of stress-denatured proteins and by disaggregating proteins, also in an autonomous, DnaK-independent fashion. Unfolded proteins bind initially to DnaJ; upon interaction with the DnaJ-bound protein, DnaK hydrolyzes its bound ATP, resulting in the formation of a stable complex. GrpE releases ADP from DnaK; ATP binding to DnaK triggers the release of the substrate protein, thus completing the reaction cycle. Several rounds of ATP-dependent interactions between DnaJ, DnaK and GrpE are required for fully efficient folding. Also involved, together with DnaK and GrpE, in the DNA replication of plasmids through activation of initiation proteins. The chain is Chaperone protein DnaJ from Pseudomonas syringae pv. syringae (strain B728a).